The chain runs to 209 residues: Outer-membrane lipoprotein carrier protein (209 aa).

The signal sequence occupies residues 1-24 (MTRYVISRLSAIALLALAPALALA).

The protein belongs to the LolA family. In terms of assembly, monomer.

The protein resides in the periplasm. Participates in the translocation of lipoproteins from the inner membrane to the outer membrane. Only forms a complex with a lipoprotein if the residue after the N-terminal Cys is not an aspartate (The Asp acts as a targeting signal to indicate that the lipoprotein should stay in the inner membrane). This is Outer-membrane lipoprotein carrier protein from Bordetella avium (strain 197N).